Consider the following 77-residue polypeptide: Probable Fe(2+)-trafficking protein (77 aa).

This sequence belongs to the Fe(2+)-trafficking protein family. Monomer.

Functionally, could be a mediator in iron transactions between iron acquisition and iron-requiring processes, such as synthesis and/or repair of Fe-S clusters in biosynthetic enzymes. The polypeptide is Probable Fe(2+)-trafficking protein (Buchnera aphidicola subsp. Acyrthosiphon pisum (strain APS) (Acyrthosiphon pisum symbiotic bacterium)).